Here is a 141-residue protein sequence, read N- to C-terminus: Hemoglobin subunit alpha (141 aa).

The Globin domain occupies 1 to 141 (VLSASDKTNL…VSTVLTSKYR (141 aa)). The residue at position 3 (S3) is a Phosphoserine. The residue at position 7 (K7) is an N6-succinyllysine. T8 carries the phosphothreonine modification. At K11 the chain carries N6-succinyllysine. K16 bears the N6-acetyllysine; alternate mark. K16 is modified (N6-succinyllysine; alternate). The residue at position 24 (Y24) is a Phosphotyrosine. The residue at position 35 (S35) is a Phosphoserine. K40 bears the N6-succinyllysine mark. Phosphoserine is present on S49. H58 lines the O2 pocket. Residue H87 participates in heme b binding. The residue at position 102 (S102) is a Phosphoserine. Phosphothreonine is present on T108. Residue S124 is modified to Phosphoserine. A phosphothreonine mark is found at T134 and T137. Residue S138 is modified to Phosphoserine.

Belongs to the globin family. As to quaternary structure, heterotetramer of two alpha chains and two beta chains. In terms of tissue distribution, red blood cells.

Functionally, involved in oxygen transport from the lung to the various peripheral tissues. The polypeptide is Hemoglobin subunit alpha (Blarina brevicauda (Northern short-tailed shrew)).